Consider the following 839-residue polypeptide: Taste receptor type 1 member 2 (839 aa).

Residues 1–19 (MRPRATTICSLFFLLRVLA) form the signal peptide. The Extracellular segment spans residues 20-566 (EPAKNSDFYL…AFLEWHEAPT (547 aa)). 9 N-linked (GlcNAc...) asparagine glycosylation sites follow: N84, N127, N248, N292, N312, N368, N428, N487, and N527. A helical transmembrane segment spans residues 567–587 (IVVALLAALGFLSTLAILVIF). Over 588–602 (WRHFQTPMVRSAGGP) the chain is Cytoplasmic. The helical transmembrane segment at 603-623 (MCFLMLTLLLVAYMVVPVYVG) threads the bilayer. Over 624–635 (PPKVSTCFCRQA) the chain is Extracellular. Residues 636–656 (LFPLCFTICISCIAVRSFQIV) form a helical membrane-spanning segment. Topologically, residues 657 to 681 (CVFKMASRFPRAYSYWVRYQGPYVS) are cytoplasmic. The chain crosses the membrane as a helical span at residues 682-702 (MAFITVLKMVTVVIGMLATGL). At 703 to 727 (NPTTRIDPDDPKIMIVSCNPNYRNS) the chain is on the extracellular side. The chain crosses the membrane as a helical span at residues 728-748 (LFFNTGLDLLLSVVGFSFAYM). The Cytoplasmic segment spans residues 749 to 760 (GKELPTNYNEAK). A helical transmembrane segment spans residues 761–781 (FITLSMTFYFTSSVSLCTFMS). The Extracellular segment spans residues 782-784 (AYN). The helical transmembrane segment at 785-805 (GVLVTIMDLLVTVLNLLAISL) threads the bilayer. The Cytoplasmic portion of the chain corresponds to 806 to 839 (GYFGPKCYMILFYPERNTPAYFNSMIQGYTMRRD).

Belongs to the G-protein coupled receptor 3 family. TAS1R subfamily. Forms heterodimers with TAS1R3.

Its subcellular location is the cell membrane. Its function is as follows. Putative taste receptor. TAS1R2/TAS1R3 recognizes diverse natural and synthetic sweeteners. This is Taste receptor type 1 member 2 (TAS1R2) from Papio hamadryas (Hamadryas baboon).